A 186-amino-acid polypeptide reads, in one-letter code: Peptide deformylase (186 aa).

Fe cation is bound by residues cysteine 113 and histidine 156. Residue glutamate 157 is part of the active site. Residue histidine 160 participates in Fe cation binding.

It belongs to the polypeptide deformylase family. Fe(2+) serves as cofactor.

The enzyme catalyses N-terminal N-formyl-L-methionyl-[peptide] + H2O = N-terminal L-methionyl-[peptide] + formate. In terms of biological role, removes the formyl group from the N-terminal Met of newly synthesized proteins. Requires at least a dipeptide for an efficient rate of reaction. N-terminal L-methionine is a prerequisite for activity but the enzyme has broad specificity at other positions. This Limosilactobacillus reuteri (strain DSM 20016) (Lactobacillus reuteri) protein is Peptide deformylase.